The following is a 29-amino-acid chain: Cytochrome b6-f complex subunit 8 (29 aa).

A helical transmembrane segment spans residues 3-23 (IVSLGWAFLMVVFSFSLSLVV).

The protein belongs to the PetN family. As to quaternary structure, the 4 large subunits of the cytochrome b6-f complex are cytochrome b6, subunit IV (17 kDa polypeptide, PetD), cytochrome f and the Rieske protein, while the 4 small subunits are PetG, PetL, PetM and PetN. The complex functions as a dimer.

The protein resides in the plastid. It is found in the chloroplast thylakoid membrane. Its function is as follows. Component of the cytochrome b6-f complex, which mediates electron transfer between photosystem II (PSII) and photosystem I (PSI), cyclic electron flow around PSI, and state transitions. The protein is Cytochrome b6-f complex subunit 8 of Chlorokybus atmophyticus (Soil alga).